We begin with the raw amino-acid sequence, 167 residues long: Cytochrome c-type biogenesis protein CcmE (167 aa).

Residues 1 to 7 (MTRKQRR) lie on the Cytoplasmic side of the membrane. A helical; Signal-anchor for type II membrane protein transmembrane segment spans residues 8–28 (LLMIGGAGVVLIVAVGLVLNA). Residues 29-167 (LRDSIVFFST…TSANAAEGGK (139 aa)) lie on the Periplasmic side of the membrane. Positions 122 and 126 each coordinate heme. Basic and acidic residues predominate over residues 137-150 (KDGHWKDDYGKKSP). The segment at 137–167 (KDGHWKDDYGKKSPGETTAGQTSANAAEGGK) is disordered. Residues 151 to 161 (GETTAGQTSAN) show a composition bias toward polar residues.

The protein belongs to the CcmE/CycJ family.

The protein resides in the cell inner membrane. In terms of biological role, heme chaperone required for the biogenesis of c-type cytochromes. Transiently binds heme delivered by CcmC and transfers the heme to apo-cytochromes in a process facilitated by CcmF and CcmH. The sequence is that of Cytochrome c-type biogenesis protein CcmE from Rhodopseudomonas palustris (strain ATCC BAA-98 / CGA009).